Here is a 380-residue protein sequence, read N- to C-terminus: MFVRHLTLTDFRSWARADLELEPGRTVFVGPNGFGKTNLVEALWYSATLGSHRVASDAPLIRAGAPRAVVSTIVVNEGRELAVDLEITTGRANKARLNRSPVRSPREVLGVLRAVLFAPEDLALVRGDPGERRRYLDELATTRRPSIAGVRADYDRVIRQRTALLKSAAGARYRGDRSVLETLDVWDGHLAAHGALLMAARADLVHHLAPEVEKAYQLLAPGSRPAAIRYRTSIDAEDDVSAEYYEAALLDAMTRRRDAELERGVCLVGPHRDDLELRLGDQMAKGYASHGESWSMALSLRLAAYELLRTDGSDPVLLLDDVFAELDAARRRALAEVAASAEQVLVTAAVAEDIPADWDARRIVIRMQDDDDGRVSMVES.

Position 30 to 37 (30 to 37 (GPNGFGKT)) interacts with ATP.

This sequence belongs to the RecF family.

It localises to the cytoplasm. In terms of biological role, the RecF protein is involved in DNA metabolism; it is required for DNA replication and normal SOS inducibility. RecF binds preferentially to single-stranded, linear DNA. It also seems to bind ATP. In Mycobacterium sp. (strain JLS), this protein is DNA replication and repair protein RecF.